We begin with the raw amino-acid sequence, 123 residues long: Cholecystokinin (123 aa).

Residues 1-19 (MNAGICVCVLLAALSTSSC) form the signal peptide. Positions 20-103 (LSLPAVSEDG…MGNNHRIKDR (84 aa)) are excised as a propeptide. The segment at 43 to 67 (HTRAAPSSGQLSLLSKAEDDEEPRS) is disordered. A Sulfotyrosine modification is found at Tyr-105. At Phe-111 the chain carries Phenylalanine amide. Positions 115–123 (SAEEYEYSS) are excised as a propeptide. 2 positions are modified to sulfotyrosine: Tyr-119 and Tyr-121.

It belongs to the gastrin/cholecystokinin family. The precursor is cleaved by proteases to produce a number of active cholecystokinins. As to expression, expressed in the ovary, kidney, gill, gastrointestinal tract and pituitary. Differentially expressed in the brain in the optic tectum-thalamus, hypothalamus, telencephalon, olfactory bulb and tract, preoptic region and posterior brain region. Expression is strongest in the hypothalamus, where localization is to the posterior ventrolateral region. Expression in the brain is transiently increased 2 hours after feeding. Abundant in the sensory layers of the vagal lobe and along the border of the sensory region of the lobe and the deep fiber laye. Also present in the facial lobe and throughout the glossopharyngeal lobe.

The protein resides in the secreted. This peptide hormone induces gall bladder contraction and the release of pancreatic enzymes in the gut. Induces the secretion of gonadotropin and growth hormone from the pituitary. Suppresses food intake and decreases the expression of preprosomatostatin genes in the forebrain. The polypeptide is Cholecystokinin (cck) (Carassius auratus (Goldfish)).